Consider the following 255-residue polypeptide: Hemin import ATP-binding protein HmuV (255 aa).

An ABC transporter domain is found at 2 to 238; sequence LQVEGLYLCR…AALKAVYGID (237 aa). Position 34-41 (34-41) interacts with ATP; the sequence is GPNGAGKS.

This sequence belongs to the ABC transporter superfamily. Heme (hemin) importer (TC 3.A.1.14.5) family. As to quaternary structure, the complex is composed of two ATP-binding proteins (HmuV), two transmembrane proteins (HmuU) and a solute-binding protein (HmuT).

It localises to the cell inner membrane. Part of the ABC transporter complex HmuTUV involved in hemin import. Responsible for energy coupling to the transport system. The sequence is that of Hemin import ATP-binding protein HmuV from Pseudomonas putida (strain ATCC 47054 / DSM 6125 / CFBP 8728 / NCIMB 11950 / KT2440).